The primary structure comprises 128 residues: Ribosome-binding factor A (128 aa).

Belongs to the RbfA family. As to quaternary structure, monomer. Binds 30S ribosomal subunits, but not 50S ribosomal subunits or 70S ribosomes.

It is found in the cytoplasm. Functionally, one of several proteins that assist in the late maturation steps of the functional core of the 30S ribosomal subunit. Associates with free 30S ribosomal subunits (but not with 30S subunits that are part of 70S ribosomes or polysomes). Required for efficient processing of 16S rRNA. May interact with the 5'-terminal helix region of 16S rRNA. The polypeptide is Ribosome-binding factor A (Microcystis aeruginosa (strain NIES-843 / IAM M-2473)).